We begin with the raw amino-acid sequence, 471 residues long: MNYDSQQPPLPPLPYAGCRRASGFPALGRGGTVPVGVWGGAGQGREGRSWGEGPRGPGLGRRDLSSADPAVLGATMESRCYGCAVKFTLFKKEYGCKNCGRAFCSGCLSFSAAVPRTGNTQQKVCKQCHEVLTRGSSANASKWSPPQNYKKRVAALEAKQKPSTSQSQGLTRQDQMIAERLARLRQENKPKLVPSQAEIEARLAALKDERQGSIPSTQEMEARLAALQGRVLPSQTPQPAHHTPDTRTQAQQTQDLLTQLAAEVAIDESWKGGGPAASLQNDLNQGGPGSTNSKRQANWSLEEEKSRLLAEAALELREENTRQERILALAKRLAMLRGQDPERVTLQDYRLPDSDDDEDEETAIQRVLQQLTEEASLDEASGFNIPAEQASRPWTQPRGAEPEAQDVDPRPEAEEEELPWCCICNEDATLRCAGCDGDLFCARCFREGHDAFELKEHQTSAYSPPRAGQEH.

A disordered region spans residues 39–64; that stretch reads GGAGQGREGRSWGEGPRGPGLGRRDL. The FYVE-type zinc finger occupies 74-133; it reads ATMESRCYGCAVKFTLFKKEYGCKNCGRAFCSGCLSFSAAVPRTGNTQQKVCKQCHEVLT. 8 residues coordinate Zn(2+): C80, C83, C96, C99, C104, C107, C125, and C128. S144 is modified (phosphoserine). Positions 174–187 match the MIM1-A motif; sequence DQMIAERLARLRQE. A Glycyl lysine isopeptide (Lys-Gly) (interchain with G-Cter in SUMO2) cross-link involves residue K207. T243 carries the phosphothreonine modification. The disordered stretch occupies residues 271-299; the sequence is KGGGPAASLQNDLNQGGPGSTNSKRQANW. The segment covering 278–299 has biased composition (polar residues); it reads SLQNDLNQGGPGSTNSKRQANW. A phosphoserine mark is found at G286 and S293. The stretch at 311–375 forms a coiled coil; that stretch reads EAALELREEN…RVLQQLTEEA (65 aa). The MIM1-B motif lies at 326-339; it reads ILALAKRLAMLRGQ. At S354 the chain carries Phosphoserine. Positions 386 to 412 are disordered; that stretch reads PAEQASRPWTQPRGAEPEAQDVDPRPE. S463 bears the Phosphoserine mark.

In terms of assembly, interacts (via MIM1-B) with VPS4A; interaction takes place at the midbody ring following cytokinesis checkpoint activation. Phosphorylated in vitro at Ser-22 by AURKB; however, phosphorylation at this site could not be confirmed in vivo. As to expression, detected in brain, heart, skeletal muscle and kidney. Expressed in the liver (at protein level).

The protein localises to the cytoplasm. The protein resides in the cytoskeleton. It localises to the microtubule organizing center. Its subcellular location is the centrosome. It is found in the cleavage furrow. The protein localises to the midbody. The protein resides in the midbody ring. Functionally, key regulator of abscission step in cytokinesis: part of the cytokinesis checkpoint, a process required to delay abscission to prevent both premature resolution of intercellular chromosome bridges and accumulation of DNA damage. Together with CHMP4C, required to retain abscission-competent VPS4 (VPS4A and/or VPS4B) at the midbody ring until abscission checkpoint signaling is terminated at late cytokinesis. Deactivation of AURKB results in dephosphorylation of CHMP4C followed by its dissociation from ZFYVE19/ANCHR and VPS4 and subsequent abscission. This is Abscission/NoCut checkpoint regulator (ZFYVE19) from Homo sapiens (Human).